The sequence spans 173 residues: MTNTENYFKVGTIVNTHGIRGEVKIMAITDFAQDRFKKGADLFIDTKQGRIPVKVQSSRLHKNMWLVLFVGVTNINEIEKYKGDDVYIEGTARPELEDDQYYYDEIIDSTVVDLDGNKIGVVKEIMETGANDVWIVQRDGQSDALIPMIDDVVKSVDVDAKLITIDALEGLLD.

The region spanning 98–171 (DDQYYYDEII…LITIDALEGL (74 aa)) is the PRC barrel domain.

The protein belongs to the RimM family. In terms of assembly, binds ribosomal protein uS19.

Its subcellular location is the cytoplasm. Its function is as follows. An accessory protein needed during the final step in the assembly of 30S ribosomal subunit, possibly for assembly of the head region. Essential for efficient processing of 16S rRNA. May be needed both before and after RbfA during the maturation of 16S rRNA. It has affinity for free ribosomal 30S subunits but not for 70S ribosomes. This is Ribosome maturation factor RimM from Leuconostoc mesenteroides subsp. mesenteroides (strain ATCC 8293 / DSM 20343 / BCRC 11652 / CCM 1803 / JCM 6124 / NCDO 523 / NBRC 100496 / NCIMB 8023 / NCTC 12954 / NRRL B-1118 / 37Y).